A 167-amino-acid chain; its full sequence is Small ribosomal subunit protein uS5 (167 aa).

In terms of domain architecture, S5 DRBM spans 11–74; the sequence is LQEKLIAVNR…EKARRAMINV (64 aa).

It belongs to the universal ribosomal protein uS5 family. As to quaternary structure, part of the 30S ribosomal subunit. Contacts proteins S4 and S8.

With S4 and S12 plays an important role in translational accuracy. In terms of biological role, located at the back of the 30S subunit body where it stabilizes the conformation of the head with respect to the body. This Yersinia enterocolitica serotype O:8 / biotype 1B (strain NCTC 13174 / 8081) protein is Small ribosomal subunit protein uS5.